The sequence spans 597 residues: MEIVYVYTKKRSEFGRQCNFSDRPAELHVDILPDESLLSNFIEKNPVDRGIQCVQEMSEHEINTERFETDSRGINHMEGGWPKDINPQEVEQVLRFRKKVEKDESYVTTIQNLASSMEHTIKQNNAIDIYEDYFADLEIEEVEETPSAKTINVFRDPNEIKRPATHLSWYPDGPKKLAVAYSSLEFQKTSAETSMDSYIWDIENPNKPEFVLKPVSPLVCLEYNPKDVHVLIGGCYNGQVAFWDTRKGSQAVEMSPVEHSHHDPVYKTIWLQSKTGTECFSASTDGQVLWWDMRKLGEPTEKLIMDPSKKGKMENAQGVISLEYEPTIPTKFMVGTEQGTIISCNRKAKTPPEKIVAIYKEHIGPVYSLQRNPFFPKNFLTVGDWTARIWSEDIRDSSIMWTKYHMSYLTDGCWSPVRPAVFFTTKMDGSLDVWDYLFKQKDPTLSLQVSDDALHSLRVQDQGRLIATGSNSGTTTLLELSSGLCTMQRNEKALVTAMFERETKREKILESRQRELRLKRQGASAQGQDDDEEGGPDEEEDLVAAAEKEFFQIVQADKKKFAAQQAKLSEQDNKIIEEAEENNGSEKKDTENGEKEG.

7 WD repeats span residues 159 to 210, 213 to 253, 260 to 301, 314 to 354, 361 to 400, 404 to 444, and 449 to 488; these read EIKR…KPEF, KPVS…QAVE, SHHD…EPTE, ENAQ…PPEK, EHIGPVYSLQRNPFFPKNFLTVGDWTARIWSEDIRDSSIM, YHMS…KDPT, and VSDDALHSLRVQDQGRLIATGSNSGTTTLLELSSGLCTMQ. Disordered regions lie at residues 512–546 and 562–597; these read RQRELRLKRQGASAQGQDDDEEGGPDEEEDLVAAA and AAQQAKLSEQDNKIIEEAEENNGSEKKDTENGEKEG. Residues 528-542 show a composition bias toward acidic residues; that stretch reads QDDDEEGGPDEEEDL. The segment covering 584–597 has biased composition (basic and acidic residues); sequence GSEKKDTENGEKEG.

This sequence belongs to the dynein intermediate chain family. In terms of assembly, consists of at least two heavy chains (alpha and beta), three intermediate chains and several light chains.

Its subcellular location is the cytoplasm. It localises to the cytoskeleton. The protein resides in the cilium axoneme. In terms of biological role, may play a role in the regulation of dynein heavy chain activity. This Heliocidaris crassispina (Sea urchin) protein is Dynein intermediate chain 3, ciliary.